The chain runs to 338 residues: RNA 3'-terminal phosphate cyclase (338 aa).

ATP-binding positions include Q103 and 283–287 (YLADQ). H308 functions as the Tele-AMP-histidine intermediate in the catalytic mechanism.

Belongs to the RNA 3'-terminal cyclase family. Type 1 subfamily.

The protein resides in the cytoplasm. The catalysed reaction is a 3'-end 3'-phospho-ribonucleotide-RNA + ATP = a 3'-end 2',3'-cyclophospho-ribonucleotide-RNA + AMP + diphosphate. Its function is as follows. Catalyzes the conversion of 3'-phosphate to a 2',3'-cyclic phosphodiester at the end of RNA. The mechanism of action of the enzyme occurs in 3 steps: (A) adenylation of the enzyme by ATP; (B) transfer of adenylate to an RNA-N3'P to produce RNA-N3'PP5'A; (C) and attack of the adjacent 2'-hydroxyl on the 3'-phosphorus in the diester linkage to produce the cyclic end product. The biological role of this enzyme is unknown but it is likely to function in some aspects of cellular RNA processing. This chain is RNA 3'-terminal phosphate cyclase, found in Escherichia coli O127:H6 (strain E2348/69 / EPEC).